The sequence spans 203 residues: Outer-membrane lipoprotein LolB (203 aa).

The N-terminal stretch at 1-20 is a signal peptide; the sequence is MNRSRRLALLCLGVPLLLQA. C21 carries N-palmitoyl cysteine lipidation. C21 carries the S-diacylglycerol cysteine lipid modification.

This sequence belongs to the LolB family. In terms of assembly, monomer.

It is found in the cell outer membrane. Plays a critical role in the incorporation of lipoproteins in the outer membrane after they are released by the LolA protein. The chain is Outer-membrane lipoprotein LolB from Cupriavidus taiwanensis (strain DSM 17343 / BCRC 17206 / CCUG 44338 / CIP 107171 / LMG 19424 / R1) (Ralstonia taiwanensis (strain LMG 19424)).